The following is a 276-amino-acid chain: Formamidopyrimidine-DNA glycosylase (276 aa).

The Schiff-base intermediate with DNA role is filled by proline 2. The Proton donor role is filled by glutamate 3. The active-site Proton donor; for beta-elimination activity is lysine 59. DNA-binding residues include histidine 93, arginine 112, and arginine 155. Residues 240–274 (QVYNREGKPCPRCGDKIAKKKVGGRSSYYCPTCQK) form an FPG-type zinc finger. The Proton donor; for delta-elimination activity role is filled by arginine 264.

Belongs to the FPG family. Monomer. Zn(2+) is required as a cofactor.

It catalyses the reaction Hydrolysis of DNA containing ring-opened 7-methylguanine residues, releasing 2,6-diamino-4-hydroxy-5-(N-methyl)formamidopyrimidine.. The catalysed reaction is 2'-deoxyribonucleotide-(2'-deoxyribose 5'-phosphate)-2'-deoxyribonucleotide-DNA = a 3'-end 2'-deoxyribonucleotide-(2,3-dehydro-2,3-deoxyribose 5'-phosphate)-DNA + a 5'-end 5'-phospho-2'-deoxyribonucleoside-DNA + H(+). Involved in base excision repair of DNA damaged by oxidation or by mutagenic agents. Acts as a DNA glycosylase that recognizes and removes damaged bases. Has a preference for oxidized purines, such as 7,8-dihydro-8-oxoguanine (8-oxoG). Has AP (apurinic/apyrimidinic) lyase activity and introduces nicks in the DNA strand. Cleaves the DNA backbone by beta-delta elimination to generate a single-strand break at the site of the removed base with both 3'- and 5'-phosphates. The chain is Formamidopyrimidine-DNA glycosylase from Pelotomaculum thermopropionicum (strain DSM 13744 / JCM 10971 / SI).